Consider the following 296-residue polypeptide: ATP synthase gamma chain (296 aa).

The protein belongs to the ATPase gamma chain family. As to quaternary structure, F-type ATPases have 2 components, CF(1) - the catalytic core - and CF(0) - the membrane proton channel. CF(1) has five subunits: alpha(3), beta(3), gamma(1), delta(1), epsilon(1). CF(0) has three main subunits: a, b and c.

Its subcellular location is the cell inner membrane. Produces ATP from ADP in the presence of a proton gradient across the membrane. The gamma chain is believed to be important in regulating ATPase activity and the flow of protons through the CF(0) complex. The polypeptide is ATP synthase gamma chain (Methylorubrum extorquens (strain CM4 / NCIMB 13688) (Methylobacterium extorquens)).